The following is a 388-amino-acid chain: Dual-specificity RNA methyltransferase RlmN (388 aa).

The active-site Proton acceptor is E109. The region spanning 115 to 354 (EDDRATLCVS…TIVRKTRGDD (240 aa)) is the Radical SAM core domain. A disulfide bond links C122 and C359. Positions 129, 133, and 136 each coordinate [4Fe-4S] cluster. S-adenosyl-L-methionine-binding positions include 183–184 (GE), S215, 237–239 (SLH), and N316. Residue C359 is the S-methylcysteine intermediate of the active site.

This sequence belongs to the radical SAM superfamily. RlmN family. The cofactor is [4Fe-4S] cluster.

It is found in the cytoplasm. It catalyses the reaction adenosine(2503) in 23S rRNA + 2 reduced [2Fe-2S]-[ferredoxin] + 2 S-adenosyl-L-methionine = 2-methyladenosine(2503) in 23S rRNA + 5'-deoxyadenosine + L-methionine + 2 oxidized [2Fe-2S]-[ferredoxin] + S-adenosyl-L-homocysteine. It carries out the reaction adenosine(37) in tRNA + 2 reduced [2Fe-2S]-[ferredoxin] + 2 S-adenosyl-L-methionine = 2-methyladenosine(37) in tRNA + 5'-deoxyadenosine + L-methionine + 2 oxidized [2Fe-2S]-[ferredoxin] + S-adenosyl-L-homocysteine. Specifically methylates position 2 of adenine 2503 in 23S rRNA and position 2 of adenine 37 in tRNAs. m2A2503 modification seems to play a crucial role in the proofreading step occurring at the peptidyl transferase center and thus would serve to optimize ribosomal fidelity. The polypeptide is Dual-specificity RNA methyltransferase RlmN (Salmonella typhimurium (strain LT2 / SGSC1412 / ATCC 700720)).